A 186-amino-acid chain; its full sequence is Large ribosomal subunit protein uL10 (186 aa).

It belongs to the universal ribosomal protein uL10 family. As to quaternary structure, part of the ribosomal stalk of the 50S ribosomal subunit. The N-terminus interacts with L11 and the large rRNA to form the base of the stalk. The C-terminus forms an elongated spine to which L12 dimers bind in a sequential fashion forming a multimeric L10(L12)X complex.

In terms of biological role, forms part of the ribosomal stalk, playing a central role in the interaction of the ribosome with GTP-bound translation factors. This is Large ribosomal subunit protein uL10 from Nitrosococcus oceani (strain ATCC 19707 / BCRC 17464 / JCM 30415 / NCIMB 11848 / C-107).